Here is a 426-residue protein sequence, read N- to C-terminus: Selenate reductase subunit C (426 aa).

A run of 10 helical transmembrane segments spans residues 5–25 (LYFT…YIRL), 40–60 (WGLW…SFLL), 78–98 (LALF…LIDL), 119–139 (WEIQ…WFLM), 187–207 (ILGI…GSLF), 223–243 (IIFL…LYSF), 261–281 (LLTL…LIGL), 302–322 (FIFW…LITI), 330–350 (MGLA…ILVI), and 385–405 (VGLI…VPVF).

The protein belongs to the NrfD family. As to quaternary structure, the complex is composed of three subunits: SrdA, SrdB and SrdC.

It is found in the cell membrane. It catalyses the reaction selenite + a quinone + H2O = selenate + a quinol. In terms of biological role, component of the respiratory selenate reductase complex, which catalyzes the reduction of selenate to selenite. This subunit probably receives electrons directly from the membrane quinone pool and transfers the electrons to the iron-sulfur clusters of SrdB. May be the membrane anchor protein subunit of the complex. This Mesobacillus selenatarsenatis (strain DSM 18680 / JCM 14380 / FERM P-15431 / SF-1) protein is Selenate reductase subunit C.